The following is a 254-amino-acid chain: Dolichol-phosphate mannosyltransferase subunit 1 (254 aa).

Residues P25, Y27, E29, V56, D58, D111, A112, D113, R140, and R227 each coordinate GDP-alpha-D-mannose. Residue D113 coordinates Mg(2+). D113 lines the Mn(2+) pocket.

It belongs to the glycosyltransferase 2 family. As to quaternary structure, component of the dolichol-phosphate mannose (DPM) synthase complex composed of dpm1, dpm2 and dpm3. It depends on Mg(2+) as a cofactor. Requires Mn(2+) as cofactor. Ca(2+) serves as cofactor.

The protein localises to the endoplasmic reticulum. It carries out the reaction a di-trans,poly-cis-dolichyl phosphate + GDP-alpha-D-mannose = a di-trans,poly-cis-dolichyl beta-D-mannosyl phosphate + GDP. The protein operates within protein modification; protein glycosylation. In terms of biological role, transfers mannose from GDP-mannose to dolichol monophosphate to form dolichol phosphate mannose (Dol-P-Man) which is the mannosyl donor in pathways leading to N-glycosylation, glycosyl phosphatidylinositol membrane anchoring, and O-mannosylation of proteins; catalytic subunit of the dolichol-phosphate mannose (DPM) synthase complex. The chain is Dolichol-phosphate mannosyltransferase subunit 1 (dpm1) from Dictyostelium discoideum (Social amoeba).